The primary structure comprises 604 residues: Kinesin-like protein KIN-14O (604 aa).

The stretch at 22–61 (MLNHDKDISALQEEISALRSRQRHLDHRRQEALDKLIDLK) forms a coiled coil. Residues 63–387 (SIRVFCRVRP…LSFAKRARSI (325 aa)) enclose the Kinesin motor domain. 141–148 (GQTGTGKT) provides a ligand contact to ATP. A coiled-coil region spans residues 383-443 (RARSIESSKE…EERKKLSSSA (61 aa)). Disordered stretches follow at residues 465 to 511 (DSAE…KTRL) and 565 to 604 (SNNS…SSLT). The span at 565 to 574 (SNNSIDSTAA) shows a compositional bias: polar residues. Residues 593–604 (LHQHRRRMSSLT) are compositionally biased toward basic residues.

The protein belongs to the TRAFAC class myosin-kinesin ATPase superfamily. Kinesin family. KIN-14 subfamily.

This chain is Kinesin-like protein KIN-14O, found in Oryza sativa subsp. japonica (Rice).